Reading from the N-terminus, the 240-residue chain is 2,3,4,5-tetrahydropyridine-2,6-dicarboxylate N-acetyltransferase (240 aa).

Belongs to the transferase hexapeptide repeat family. DapH subfamily.

It carries out the reaction (S)-2,3,4,5-tetrahydrodipicolinate + acetyl-CoA + H2O = L-2-acetamido-6-oxoheptanedioate + CoA. It participates in amino-acid biosynthesis; L-lysine biosynthesis via DAP pathway; LL-2,6-diaminopimelate from (S)-tetrahydrodipicolinate (acetylase route): step 1/3. Catalyzes the transfer of an acetyl group from acetyl-CoA to tetrahydrodipicolinate. The chain is 2,3,4,5-tetrahydropyridine-2,6-dicarboxylate N-acetyltransferase from Halalkalibacterium halodurans (strain ATCC BAA-125 / DSM 18197 / FERM 7344 / JCM 9153 / C-125) (Bacillus halodurans).